We begin with the raw amino-acid sequence, 440 residues long: Tyrosine--tRNA ligase (440 aa).

Residue tyrosine 46 coordinates L-tyrosine. The short motif at 51–60 is the 'HIGH' region element; the sequence is PTAASLHIGN. L-tyrosine contacts are provided by tyrosine 181 and glutamine 185. Positions 241-245 match the 'KMSKS' region motif; it reads KFGKS. Lysine 244 is an ATP binding site. Positions 373–439 constitute an S4 RNA-binding domain; that stretch reads DRVIDAAQAA…GKKALGAVEN (67 aa).

This sequence belongs to the class-I aminoacyl-tRNA synthetase family. TyrS type 1 subfamily. In terms of assembly, homodimer.

The protein resides in the cytoplasm. The enzyme catalyses tRNA(Tyr) + L-tyrosine + ATP = L-tyrosyl-tRNA(Tyr) + AMP + diphosphate + H(+). Catalyzes the attachment of tyrosine to tRNA(Tyr) in a two-step reaction: tyrosine is first activated by ATP to form Tyr-AMP and then transferred to the acceptor end of tRNA(Tyr). This chain is Tyrosine--tRNA ligase, found in Bifidobacterium longum subsp. infantis (strain ATCC 15697 / DSM 20088 / JCM 1222 / NCTC 11817 / S12).